The following is a 144-amino-acid chain: Putative pre-16S rRNA nuclease (144 aa).

Belongs to the YqgF nuclease family.

It is found in the cytoplasm. In terms of biological role, could be a nuclease involved in processing of the 5'-end of pre-16S rRNA. The polypeptide is Putative pre-16S rRNA nuclease (Prochlorococcus marinus (strain NATL1A)).